The primary structure comprises 143 residues: Probable cyclic pyranopterin monophosphate synthase (143 aa).

Residues 61 to 63 (YCH) and 97 to 98 (ME) contribute to the substrate site. Aspartate 112 is a catalytic residue.

This sequence belongs to the MoaC family. As to quaternary structure, homohexamer; trimer of dimers.

It carries out the reaction (8S)-3',8-cyclo-7,8-dihydroguanosine 5'-triphosphate = cyclic pyranopterin phosphate + diphosphate. It participates in cofactor biosynthesis; molybdopterin biosynthesis. Functionally, catalyzes the conversion of (8S)-3',8-cyclo-7,8-dihydroguanosine 5'-triphosphate to cyclic pyranopterin monophosphate (cPMP). The sequence is that of Probable cyclic pyranopterin monophosphate synthase from Thermoplasma acidophilum (strain ATCC 25905 / DSM 1728 / JCM 9062 / NBRC 15155 / AMRC-C165).